The chain runs to 456 residues: Methionine aminopeptidase 2 (456 aa).

Residues 1–11 are compositionally biased toward pro residues; the sequence is MTIPVPKPAHP. The tract at residues 1 to 127 is disordered; it reads MTIPVPKPAH…SYRTTSSEKR (127 aa). Residues 31-45 show a composition bias toward acidic residues; sequence EADEEEDDDDEEGKE. Basic residues predominate over residues 66 to 79; sequence KKKKKKKKKPKKKK. Position 209 (His-209) interacts with substrate. A divalent metal cation contacts are provided by Asp-229, Asp-240, and His-309. Residue His-317 participates in substrate binding. Residues Glu-343 and Glu-437 each coordinate a divalent metal cation.

Belongs to the peptidase M24A family. Methionine aminopeptidase eukaryotic type 2 subfamily. Co(2+) serves as cofactor. Zn(2+) is required as a cofactor. It depends on Mn(2+) as a cofactor. Requires Fe(2+) as cofactor.

The protein resides in the cytoplasm. It carries out the reaction Release of N-terminal amino acids, preferentially methionine, from peptides and arylamides.. Functionally, cotranslationally removes the N-terminal methionine from nascent proteins. The N-terminal methionine is often cleaved when the second residue in the primary sequence is small and uncharged (Met-Ala-, Cys, Gly, Pro, Ser, Thr, or Val). The polypeptide is Methionine aminopeptidase 2 (Puccinia graminis f. sp. tritici (strain CRL 75-36-700-3 / race SCCL) (Black stem rust fungus)).